A 164-amino-acid chain; its full sequence is T-cell surface glycoprotein CD3 zeta chain (164 aa).

The first 21 residues, 1–21, serve as a signal peptide directing secretion; the sequence is MKWKALFTAAILQAQLPITEA. Residues 22–30 are Extracellular-facing; sequence QSFGLLDPK. A helical transmembrane segment spans residues 31–51; sequence LCYLLDGILFIYGVILTALFL. The Cytoplasmic portion of the chain corresponds to 52 to 164; that stretch reads RVKFSRSADA…ALHMQALPPR (113 aa). Phosphoserine is present on S58. ITAM domains follow at residues 61 to 89, 100 to 128, and 131 to 159; these read APAY…LDKR, PQRR…EIGM, and ERRR…LHMQ. Residues Y64, Y72, Y83, Y111, Y123, Y142, and Y153 each carry the phosphotyrosine modification. Residues 83-96 are compositionally biased toward basic and acidic residues; it reads YDVLDKRRGRDPEM. The tract at residues 83–111 is disordered; it reads YDVLDKRRGRDPEMGGKPQRRKNPQEGLY. A disordered region spans residues 128–154; sequence MKGERRRGKGHDGLYQGLSTATKDTYD.

The protein belongs to the CD3Z/FCER1G family. The TCR-CD3 complex is composed of a CD3D/CD3E and a CD3G/CD3E heterodimers that preferentially associate with TCRalpha and TCRbeta, respectively, to form TCRalpha/CD3E/CD3G and TCRbeta/CD3G/CD3E trimers. In turn, the hexamer interacts with CD3Z homodimer to form the TCR-CD3 complex. Alternatively, TCRalpha and TCRbeta can be replaced by TCRgamma and TCRdelta. Interacts with SLA. Interacts with TRAT1. Interacts with DOCK2. Interacts with SLA2. Interacts with SHB. Interacts with ZAP70. Interacts (tyrosine phosphorylated) with SHC1 (via SH2 domain). Interacts with PTPRC. Interacts with CRK; this interaction regulates CD3Z phosphorylation. Interacts (on T cell side) with CD81, ICAM1 and CD9 at immunological synapses between antigen-presenting cells and T cells. Interacts with CD160. Interacts with LY6E. The signaling subunit of immunoglobulin gamma (IgG) Fc receptor complex. As a homodimer or a heterodimer with FCER1G, associates with the ligand binding subunit FCGR3A (via transmembrane domain); this interaction is a prerequisite for Fc receptor complex expression on the cell surface. Interacts with CD5. In terms of assembly, (Microbial infection) Interacts with HIV-1 Nef; this interaction up-regulates the expression of the Fas ligand (FASLG) at the cell surface. As to quaternary structure, (Microbial infection) Interacts with HIV-2 Nef protein; this interaction induces down-regulation of cell surface TCR/CD3 complexes. In terms of processing, phosphorylated on Tyr residues after T-cell receptor triggering by LCK in association with CD4/CD8. As to expression, CD3Z is expressed in normal lymphoid tissue and in peripheral blood mononuclear cells (PBMCs).

The protein resides in the cell membrane. Its function is as follows. Part of the TCR-CD3 complex present on T-lymphocyte cell surface that plays an essential role in adaptive immune response. When antigen presenting cells (APCs) activate T-cell receptor (TCR), TCR-mediated signals are transmitted across the cell membrane by the CD3 chains CD3D, CD3E, CD3G and CD3Z. All CD3 chains contain immunoreceptor tyrosine-based activation motifs (ITAMs) in their cytoplasmic domain. Upon TCR engagement, these motifs become phosphorylated by Src family protein tyrosine kinases LCK and FYN, resulting in the activation of downstream signaling pathways. CD3Z ITAMs phosphorylation creates multiple docking sites for the protein kinase ZAP70 leading to ZAP70 phosphorylation and its conversion into a catalytically active enzyme. Plays an important role in intrathymic T-cell differentiation. Additionally, participates in the activity-dependent synapse formation of retinal ganglion cells (RGCs) in both the retina and dorsal lateral geniculate nucleus (dLGN). This Homo sapiens (Human) protein is T-cell surface glycoprotein CD3 zeta chain (CD247).